We begin with the raw amino-acid sequence, 704 residues long: Myb-related protein B (704 aa).

HTH myb-type domains are found at residues 26 to 77, 78 to 133, and 134 to 184; these read RDNR…LRVL, NPDL…NPEV, and KKSC…KRKV. Positions 54–77 form a DNA-binding region, H-T-H motif; that stretch reads WKFLASHFPNRTDQQCQYRWLRVL. Lysine 104 participates in a covalent cross-link: Glycyl lysine isopeptide (Lys-Gly) (interchain with G-Cter in SUMO2). 2 DNA-binding regions (H-T-H motif) span residues 106-129 and 157-180; these read WTLI…HNHL and WAEI…NSTI. Lysine 197 participates in a covalent cross-link: Glycyl lysine isopeptide (Lys-Gly) (interchain with G-Cter in SUMO2). Position 267 is a phosphothreonine (threonine 267). A Glycyl lysine isopeptide (Lys-Gly) (interchain with G-Cter in SUMO2) cross-link involves residue lysine 275. Serine 282 carries the post-translational modification Phosphoserine. Residues 325 to 412 are disordered; sequence LSKFDLPEEP…GSGIGTPPSV (88 aa). Over residues 339–366 the composition is skewed to low complexity; sequence SVVSSPVQPQTSQQQQEEALQSSQQAAT. Residue serine 396 is modified to Phosphoserine. Lysine 414 participates in a covalent cross-link: Glycyl lysine isopeptide (Lys-Gly) (interchain with G-Cter in SUMO2). Phosphothreonine; by CDK2 occurs at positions 443 and 447. Residues lysine 450 and lysine 485 each participate in a glycyl lysine isopeptide (Lys-Gly) (interchain with G-Cter in SUMO2) cross-link. Threonine 490 and threonine 497 each carry phosphothreonine; by CDK2. Residues lysine 502 and lysine 513 each participate in a glycyl lysine isopeptide (Lys-Gly) (interchain with G-Cter in SUMO2) cross-link. The residue at position 524 (threonine 524) is a Phosphothreonine; by CDK2. Residues lysine 527, lysine 537, and lysine 550 each participate in a glycyl lysine isopeptide (Lys-Gly) (interchain with G-Cter in SUMO2) cross-link. Serine 581 bears the Phosphoserine; by CDK2 mark. Glycyl lysine isopeptide (Lys-Gly) (interchain with G-Cter in SUMO2) cross-links involve residues lysine 588 and lysine 600. The interval 603–626 is disordered; the sequence is SSTMPKPLSLPTSVTPSSCGFTSP. Residues 607-620 show a composition bias toward low complexity; sequence PKPLSLPTSVTPSS. Residues lysine 629, lysine 643, and lysine 652 each participate in a glycyl lysine isopeptide (Lys-Gly) (interchain with G-Cter in SUMO2) cross-link.

As to quaternary structure, component of the DREAM complex (also named LINC complex) at least composed of E2F4, E2F5, LIN9, LIN37, LIN52, LIN54, MYBL1, MYBL2, RBL1, RBL2, RBBP4, TFDP1 and TFDP2. The complex exists in quiescent cells where it represses cell cycle-dependent genes. It dissociates in S phase when LIN9, LIN37, LIN52 and LIN54 form a subcomplex that binds to MYBL2. Interacts with CCNF (via the Cyclin N-terminal domain). In terms of processing, phosphorylated by cyclin A/CDK2 during S-phase. Phosphorylation at Thr-524 is probably involved in transcriptional activity.

It localises to the nucleus. Its function is as follows. Transcription factor involved in the regulation of cell survival, proliferation, and differentiation. Transactivates the expression of the CLU gene. In Mus musculus (Mouse), this protein is Myb-related protein B (Mybl2).